The following is a 313-amino-acid chain: Acetaldehyde dehydrogenase (313 aa).

Position 13-16 (Ser-13–Ile-16) interacts with NAD(+). Cys-133 serves as the catalytic Acyl-thioester intermediate. NAD(+) contacts are provided by residues Ser-164–Asn-172 and Asn-291.

It belongs to the acetaldehyde dehydrogenase family.

The enzyme catalyses acetaldehyde + NAD(+) + CoA = acetyl-CoA + NADH + H(+). The polypeptide is Acetaldehyde dehydrogenase (Cupriavidus pinatubonensis (strain JMP 134 / LMG 1197) (Cupriavidus necator (strain JMP 134))).